Here is a 312-residue protein sequence, read N- to C-terminus: Transcription initiation factor IIB 1 (312 aa).

The TFIIB-type zinc-finger motif lies at 12–43 (EIERCPECGSTNLIRDYEHGELVCGECGAVIE). Residues Cys-16, Cys-19, Cys-35, and Cys-38 each coordinate Zn(2+). 2 tandem repeats follow at residues 129–212 (QELE…SRYL) and 223–304 (DYIS…ELTE).

Belongs to the TFIIB family.

In terms of biological role, stabilizes TBP binding to an archaeal box-A promoter. Also responsible for recruiting RNA polymerase II to the pre-initiation complex (DNA-TBP-TFIIB). In Thermoplasma volcanium (strain ATCC 51530 / DSM 4299 / JCM 9571 / NBRC 15438 / GSS1), this protein is Transcription initiation factor IIB 1.